The chain runs to 219 residues: Uracil-DNA glycosylase (219 aa).

Asp61 serves as the catalytic Proton acceptor.

It belongs to the uracil-DNA glycosylase (UDG) superfamily. UNG family.

It localises to the cytoplasm. The catalysed reaction is Hydrolyzes single-stranded DNA or mismatched double-stranded DNA and polynucleotides, releasing free uracil.. Excises uracil residues from the DNA which can arise as a result of misincorporation of dUMP residues by DNA polymerase or due to deamination of cytosine. The chain is Uracil-DNA glycosylase from Neisseria meningitidis serogroup C (strain 053442).